The sequence spans 512 residues: Monocarboxylate transporter 14 (512 aa).

At 1 to 29 (MYTSHEDIGYDLEDDRKAKNKKTLKPHPD) the chain is on the cytoplasmic side. 12 helical membrane passes run 30 to 50 (IDGG…ILIM), 76 to 96 (WVSS…GLFI), 105 to 125 (AIIG…AANV), 129 to 149 (FITF…PAVV), 161 to 181 (LAQG…TVLL), 193 to 211 (AMFI…GALM), 317 to 337 (MFVA…IPFI), 355 to 375 (FPLT…LGAV), 381 to 401 (ISVW…IFLL), 410 to 430 (LAVI…MPVV), 446 to 466 (IIIC…GWIF), and 476 to 496 (FYIC…QPCI). Residues 497–512 (QMIDQSRRKCIEGAHV) lie on the Cytoplasmic side of the membrane.

The protein belongs to the major facilitator superfamily. Monocarboxylate porter (TC 2.A.1.13) family.

The protein localises to the cell membrane. Its function is as follows. Proton-linked monocarboxylate transporter. May catalyze the transport of monocarboxylates across the plasma membrane. The chain is Monocarboxylate transporter 14 (Slc16a14) from Mus musculus (Mouse).